A 199-amino-acid chain; its full sequence is CASP-like protein 1B2 (199 aa).

Over M1–K22 the chain is Cytoplasmic. A helical membrane pass occupies residues W23–M43. At G44 to P74 the chain is on the extracellular side. A helical membrane pass occupies residues A75 to M95. Over G96 to M112 the chain is Cytoplasmic. The chain crosses the membrane as a helical span at residues I113–F133. At M134–G163 the chain is on the extracellular side. The helical transmembrane segment at A164–I184 threads the bilayer. Residues K185–P199 lie on the Cytoplasmic side of the membrane.

It belongs to the Casparian strip membrane proteins (CASP) family. In terms of assembly, homodimer and heterodimers.

It localises to the cell membrane. The polypeptide is CASP-like protein 1B2 (Populus trichocarpa (Western balsam poplar)).